Here is a 503-residue protein sequence, read N- to C-terminus: Arginyl-tRNA--protein transferase 1 (503 aa).

This sequence belongs to the R-transferase family.

It is found in the cytoplasm. It catalyses the reaction an N-terminal L-alpha-aminoacyl-[protein] + L-arginyl-tRNA(Arg) = an N-terminal L-arginyl-L-aminoacyl-[protein] + tRNA(Arg) + H(+). Functionally, involved in the post-translational conjugation of arginine to the N-terminal aspartate or glutamate of a protein. This arginylation is required for degradation of the protein via the ubiquitin pathway. Does not arginylate cysteine residues. The protein is Arginyl-tRNA--protein transferase 1 (ATE1) of Saccharomyces cerevisiae (strain ATCC 204508 / S288c) (Baker's yeast).